A 550-amino-acid chain; its full sequence is Medium-chain acyl-CoA ligase Mig (550 aa).

An N-terminal signal peptide occupies residues 1–19 (MSDTTTAFTVPAVAKAVAA).

The protein belongs to the ATP-dependent AMP-binding enzyme family.

It localises to the secreted. The protein localises to the cell wall. It catalyses the reaction a medium-chain fatty acid + ATP + CoA = a medium-chain fatty acyl-CoA + AMP + diphosphate. The catalysed reaction is hexanoate + ATP + CoA = hexanoyl-CoA + AMP + diphosphate. The enzyme catalyses heptanoate + ATP + CoA = heptanoyl-CoA + AMP + diphosphate. It carries out the reaction octanoate + ATP + CoA = octanoyl-CoA + AMP + diphosphate. It catalyses the reaction decanoate + ATP + CoA = decanoyl-CoA + AMP + diphosphate. The catalysed reaction is dodecanoate + ATP + CoA = dodecanoyl-CoA + AMP + diphosphate. The enzyme catalyses tetradecanoate + ATP + CoA = tetradecanoyl-CoA + AMP + diphosphate. It carries out the reaction (9Z)-octadecenoate + ATP + CoA = (9Z)-octadecenoyl-CoA + AMP + diphosphate. It catalyses the reaction (9Z,12Z,15Z)-octadecatrienoate + ATP + CoA = (9Z,12Z,15Z)-octadecatrienoyl-CoA + AMP + diphosphate. The catalysed reaction is (5Z,8Z,11Z,14Z)-eicosatetraenoate + ATP + CoA = (5Z,8Z,11Z,14Z)-eicosatetraenoyl-CoA + AMP + diphosphate. Its pathway is lipid metabolism; fatty acid metabolism. Its activity is regulated as follows. Inhibited by 2-hydroxydodecanoic acid, a typical inhibitor of medium-chain acyl-CoA synthetases. Functionally, catalyzes the activation of medium-chain fatty acids as acyl-coenzyme A (acyl-CoA). Shows maximal activity with saturated fatty acids of medium-chain length between C6 and C12. Has lower activity with tridecanoic acid (C13), tetradecanoic acid (C14) and with unsaturated fatty acids like oleic acid (C18:1), linolenic acid (C18:3) and arachidonic acid (C20:4). Shows weak activity with some aromatic carbon acids. Involved in the metabolism of fatty acid during mycobacterial survival in macrophages. This Mycobacterium avium protein is Medium-chain acyl-CoA ligase Mig.